The following is a 197-amino-acid chain: Imidazoleglycerol-phosphate dehydratase (197 aa).

This sequence belongs to the imidazoleglycerol-phosphate dehydratase family.

The protein localises to the cytoplasm. It catalyses the reaction D-erythro-1-(imidazol-4-yl)glycerol 3-phosphate = 3-(imidazol-4-yl)-2-oxopropyl phosphate + H2O. The protein operates within amino-acid biosynthesis; L-histidine biosynthesis; L-histidine from 5-phospho-alpha-D-ribose 1-diphosphate: step 6/9. This Saccharophagus degradans (strain 2-40 / ATCC 43961 / DSM 17024) protein is Imidazoleglycerol-phosphate dehydratase.